We begin with the raw amino-acid sequence, 292 residues long: Peroxidase 2 (292 aa).

4 disulfides stabilise this stretch: cysteine 7–cysteine 86, cysteine 40–cysteine 45, cysteine 92–cysteine 288, and cysteine 171–cysteine 199. Histidine 38 functions as the Proton acceptor in the catalytic mechanism. The Ca(2+) site is built by aspartate 39, valine 42, glycine 44, aspartate 46, and serine 48. An N-linked (GlcNAc...) asparagine glycan is attached at asparagine 68. Position 134 (proline 134) interacts with substrate. The N-linked (GlcNAc...) asparagine glycan is linked to asparagine 139. Histidine 164 provides a ligand contact to heme b. Position 165 (threonine 165) interacts with Ca(2+). An N-linked (GlcNAc...) asparagine glycan is attached at asparagine 179. 3 residues coordinate Ca(2+): aspartate 210, threonine 213, and aspartate 218.

This sequence belongs to the peroxidase family. Classical plant (class III) peroxidase subfamily. Requires Ca(2+) as cofactor. Heme b serves as cofactor.

The catalysed reaction is 2 a phenolic donor + H2O2 = 2 a phenolic radical donor + 2 H2O. Its function is as follows. Removal of H(2)O(2), oxidation of toxic reductants, biosynthesis and degradation of lignin, suberization, auxin catabolism, response to environmental stresses such as wounding, pathogen attack and oxidative stress. These functions might be dependent on each isozyme/isoform in each plant tissue. The protein is Peroxidase 2 of Cucumis sativus (Cucumber).